The primary structure comprises 99 residues: N(2)-fixation sustaining protein CowN (99 aa).

It belongs to the CowN family.

Its function is as follows. Is required to sustain N(2)-dependent growth in the presence of low levels of carbon monoxide (CO). Probably acts by protecting the N(2) fixation ability of the nitrogenase complex, which is inactivated in the presence of CO. The protein is N(2)-fixation sustaining protein CowN of Magnetococcus marinus (strain ATCC BAA-1437 / JCM 17883 / MC-1).